A 137-amino-acid polypeptide reads, in one-letter code: Basic phospholipase A2 homolog Pgo-K49 (137 aa).

The signal sequence occupies residues 1–16 (MRTLLIVAVLLVGVEG). 7 disulfides stabilise this stretch: Cys-42/Cys-131, Cys-44/Cys-60, Cys-59/Cys-111, Cys-65/Cys-137, Cys-66/Cys-104, Cys-73/Cys-97, and Cys-91/Cys-102. The segment at 121 to 133 (KKYKIHMKFFCKK) is important for membrane-damaging activities in eukaryotes and bacteria; heparin-binding.

In terms of tissue distribution, expressed by the venom gland.

Its subcellular location is the secreted. Snake venom phospholipase A2 homolog that lacks enzymatic activity. Is myotoxic. A model of myotoxic mechanism has been proposed: an apo Lys49-PLA2 is activated by the entrance of a hydrophobic molecule (e.g. fatty acid) at the hydrophobic channel of the protein leading to a reorientation of a monomer. This reorientation causes a transition between 'inactive' to 'active' states, causing alignment of C-terminal and membrane-docking sites (MDoS) side-by-side and putting the membrane-disruption sites (MDiS) in the same plane, exposed to solvent and in a symmetric position for both monomers. The MDoS region stabilizes the toxin on membrane by the interaction of charged residues with phospholipid head groups. Subsequently, the MDiS region destabilizes the membrane with penetration of hydrophobic residues. This insertion causes a disorganization of the membrane, allowing an uncontrolled influx of ions (i.e. calcium and sodium), and eventually triggering irreversible intracellular alterations and cell death. In Cerrophidion godmani (Porthidium godmani), this protein is Basic phospholipase A2 homolog Pgo-K49.